Here is a 315-residue protein sequence, read N- to C-terminus: Atrochrysone carboxyl ACP thioesterase (315 aa).

Residues His95, His97, Asp99, and His100 each coordinate Zn(2+). The Proton donor/acceptor role is filled by Asp99.

Belongs to the metallo-beta-lactamase superfamily. It depends on Zn(2+) as a cofactor. As to expression, endocrocin is specifically produced in conidia.

The catalysed reaction is atrochrysone carboxyl-[ACP] + H2O = atrochrysone carboxylate + holo-[ACP] + H(+). In terms of biological role, atrochrysone carboxyl ACP thioesterase; part of the gene cluster that mediates the biosynthesis of endocrocin, a simple anthraquinone interesting for many biotechnological applications. The pathway begins with the synthesis of atrochrysone thioester by the polyketide synthase (PKS) encA. The atrochrysone carboxyl ACP thioesterase encB then breaks the thioester bond and releases the atrochrysone carboxylic acid from encA. The atrochrysone carboxylic acid is then converted to endocrocin anthrone which is further oxidized into endocrocin by the anthrone oxygenase encC. The exact function of encD has not been identified yet, but it negatively regulates endocrocin production, likely through the modification of endocrocin itself. The chain is Atrochrysone carboxyl ACP thioesterase from Aspergillus fumigatus (strain ATCC MYA-4609 / CBS 101355 / FGSC A1100 / Af293) (Neosartorya fumigata).